We begin with the raw amino-acid sequence, 991 residues long: KAT8 regulatory NSL complex subunit 1-like protein (991 aa).

Residue K136 forms a Glycyl lysine isopeptide (Lys-Gly) (interchain with G-Cter in SUMO2) linkage. The segment at 443 to 462 is disordered; it reads VNSQVPQRSEEPLPEHDFEM. Over residues 450–461 the composition is skewed to basic and acidic residues; sequence RSEEPLPEHDFE. The residue at position 463 (S463) is a Phosphoserine. The span at 749-763 shows a compositional bias: polar residues; the sequence is ANVTSRTQNPSSQNT. The disordered stretch occupies residues 749–770; sequence ANVTSRTQNPSSQNTSRRRLRS. A PEHE domain is found at 798 to 919; sequence EILTPRWRKV…DGQEDKSLRW (122 aa). N6-acetyllysine is present on K863.

Post-translationally, acetylated on lysine residues by KAT8 upon ionizing radiation-induced DNA damage; deacetylated by HDAC3.

This Mus musculus (Mouse) protein is KAT8 regulatory NSL complex subunit 1-like protein (Kansl1l).